We begin with the raw amino-acid sequence, 446 residues long: RUN domain-containing protein 3A (446 aa).

The interval 1–298 is interaction with RAP2A; sequence METSFVQTTM…LQLQLEEAAA (298 aa). The 138-residue stretch at 52–189 folds into the RUN domain; that stretch reads DDSSEEFVNF…IDFSFCLKGE (138 aa). Thr215 is modified (phosphothreonine). The interval 216 to 239 is disordered; sequence DEEERHSAESSTSEDNSPEHPYLP. Ser232 is modified (phosphoserine). Positions 267 to 322 form a coiled coil; the sequence is YLEELVRLRESQLKDLEAENRRLQLQLEEAAAQNQREKRELEGVILELQEQLTGLI. Positions 372 to 384 are enriched in polar residues; the sequence is PLSAEASLSSDSQ. The tract at residues 372-404 is disordered; that stretch reads PLSAEASLSSDSQRLGEGTRDEEPWGPIGKDPT. Ser416 and Ser419 each carry phosphoserine.

It belongs to the RUNDC3 family. In terms of assembly, interacts with the GTP-bound form of RAP2A.

May act as an effector of RAP2A in neuronal cells. This is RUN domain-containing protein 3A (RUNDC3A) from Pongo abelii (Sumatran orangutan).